A 392-amino-acid chain; its full sequence is Protein DJ-1 homolog A (392 aa).

PfpI endopeptidase domains follow at residues 6 to 174 (KTVL…EQLF) and 212 to 378 (PQIL…EKFY).

It belongs to the peptidase C56 family. Homodimer. Interacts with CSD1 and GPX2.

It is found in the cytoplasm. Its subcellular location is the cytosol. It localises to the nucleus. In terms of biological role, involved in oxidative stress response. Confers protection against diverse stresses by binding both CSD1 and GPX2 and mediating the cytosolic activation of the Cu-Zn-dependent superoxide dismutase activity of CSD1. This is Protein DJ-1 homolog A (DJ1A) from Arabidopsis thaliana (Mouse-ear cress).